The primary structure comprises 190 residues: uncharacterized protein (190 aa).

The Cytoplasmic segment spans residues 1–16; the sequence is MAILPEFISQTPPVTR. A helical transmembrane segment spans residues 17–37; sequence YIVLGTLFTTLAVNFGYVSDL. The Lumenal portion of the chain corresponds to 38-55; that stretch reads KIFFNWKLFLAKGEYWRA. A helical transmembrane segment spans residues 56 to 76; that stretch reads ITTFLYVGPFGLELILYLSFL. Topologically, residues 77–98 are cytoplasmic; sequence LRFMSMLERSSPPPQTQSFLKT. Residues 99 to 119 form a helical membrane-spanning segment; the sequence is VLIVWFSLLVTSYFSYMPFAA. The Lumenal segment spans residues 120–138; the sequence is SYFSFTMLYIWSWKHPLYR. The chain crosses the membrane as a helical span at residues 139–159; sequence ISILGLFDVKAPYVPWVMVLL. Over 160–163 the chain is Cytoplasmic; the sequence is RWLR. Residues 164 to 184 form a helical membrane-spanning segment; the sequence is TGIFPLLDLISALIGHVYFFV. The Lumenal portion of the chain corresponds to 185–190; that stretch reads TDFSTV.

The protein belongs to the derlin family.

It localises to the endoplasmic reticulum membrane. This is an uncharacterized protein from Schizosaccharomyces pombe (strain 972 / ATCC 24843) (Fission yeast).